A 200-amino-acid polypeptide reads, in one-letter code: Pyrrolidone-carboxylate peptidase (200 aa).

Catalysis depends on residues Glu78, Cys141, and His165.

Belongs to the peptidase C15 family. Homotetramer.

It is found in the cytoplasm. It carries out the reaction Release of an N-terminal pyroglutamyl group from a polypeptide, the second amino acid generally not being Pro.. Functionally, removes 5-oxoproline from various penultimate amino acid residues except L-proline. This chain is Pyrrolidone-carboxylate peptidase, found in Lactobacillus acidophilus (strain ATCC 700396 / NCK56 / N2 / NCFM).